Here is a 526-residue protein sequence, read N- to C-terminus: Peptide chain release factor 3 (526 aa).

The tr-type G domain occupies N8 to Q277. Residues S17 to T24, D85 to H89, and N139 to D142 each bind GTP.

Belongs to the TRAFAC class translation factor GTPase superfamily. Classic translation factor GTPase family. PrfC subfamily.

It localises to the cytoplasm. Its function is as follows. Increases the formation of ribosomal termination complexes and stimulates activities of RF-1 and RF-2. It binds guanine nucleotides and has strong preference for UGA stop codons. It may interact directly with the ribosome. The stimulation of RF-1 and RF-2 is significantly reduced by GTP and GDP, but not by GMP. In Actinobacillus pleuropneumoniae serotype 7 (strain AP76), this protein is Peptide chain release factor 3.